A 381-amino-acid polypeptide reads, in one-letter code: Alcohol dehydrogenase-like 6 (381 aa).

The Zn(2+) site is built by Cys53, Ser55, His72, Cys102, Cys105, Cys108, Cys116, and Cys179. An alcohol is bound by residues Ser55 and His72. Residue Ser55 coordinates NAD(+). NAD(+)-binding positions include 204-209 (GLGTVG), Asp228, Lys233, 297-299 (LGV), Phe324, and Arg374.

Belongs to the zinc-containing alcohol dehydrogenase family. Class-III subfamily. Homodimer. Requires Zn(2+) as cofactor.

The protein resides in the cytoplasm. The catalysed reaction is a primary alcohol + NAD(+) = an aldehyde + NADH + H(+). It carries out the reaction a secondary alcohol + NAD(+) = a ketone + NADH + H(+). The polypeptide is Alcohol dehydrogenase-like 6 (Arabidopsis thaliana (Mouse-ear cress)).